The chain runs to 209 residues: Small ribosomal subunit protein uS3 (209 aa).

The KH type-2 domain maps to 38 to 107 (IRKVIKSKYA…RFIVNVEEIK (70 aa)).

This sequence belongs to the universal ribosomal protein uS3 family. In terms of assembly, part of the 30S ribosomal subunit. Forms a tight complex with proteins S10 and S14.

In terms of biological role, binds the lower part of the 30S subunit head. Binds mRNA in the 70S ribosome, positioning it for translation. In Thermosipho melanesiensis (strain DSM 12029 / CIP 104789 / BI429), this protein is Small ribosomal subunit protein uS3.